The sequence spans 735 residues: Phosphoribosylformylglycinamidine synthase subunit PurL (735 aa).

His-48 is a catalytic residue. ATP-binding residues include Tyr-51 and Lys-90. Glu-92 contributes to the Mg(2+) binding site. Residues 93–96 (SHNH) and Arg-115 contribute to the substrate site. His-94 (proton acceptor) is an active-site residue. Asp-116 serves as a coordination point for Mg(2+). Gln-239 serves as a coordination point for substrate. Asp-267 serves as a coordination point for Mg(2+). 311–313 (ESQ) serves as a coordination point for substrate. Asp-492 and Gly-529 together coordinate ATP. Asn-530 serves as a coordination point for Mg(2+). Ser-532 serves as a coordination point for substrate.

Belongs to the FGAMS family. Monomer. Part of the FGAM synthase complex composed of 1 PurL, 1 PurQ and 2 PurS subunits.

It localises to the cytoplasm. The catalysed reaction is N(2)-formyl-N(1)-(5-phospho-beta-D-ribosyl)glycinamide + L-glutamine + ATP + H2O = 2-formamido-N(1)-(5-O-phospho-beta-D-ribosyl)acetamidine + L-glutamate + ADP + phosphate + H(+). It participates in purine metabolism; IMP biosynthesis via de novo pathway; 5-amino-1-(5-phospho-D-ribosyl)imidazole from N(2)-formyl-N(1)-(5-phospho-D-ribosyl)glycinamide: step 1/2. In terms of biological role, part of the phosphoribosylformylglycinamidine synthase complex involved in the purines biosynthetic pathway. Catalyzes the ATP-dependent conversion of formylglycinamide ribonucleotide (FGAR) and glutamine to yield formylglycinamidine ribonucleotide (FGAM) and glutamate. The FGAM synthase complex is composed of three subunits. PurQ produces an ammonia molecule by converting glutamine to glutamate. PurL transfers the ammonia molecule to FGAR to form FGAM in an ATP-dependent manner. PurS interacts with PurQ and PurL and is thought to assist in the transfer of the ammonia molecule from PurQ to PurL. The protein is Phosphoribosylformylglycinamidine synthase subunit PurL of Bradyrhizobium sp. (strain BTAi1 / ATCC BAA-1182).